A 955-amino-acid chain; its full sequence is Thyroid hormone receptor-associated protein 3 (955 aa).

The tract at residues 1-94 (MSKTNKSKSG…YFRGRNRGFY (94 aa)) is disordered. An N-acetylserine modification is found at Ser-2. A required for mRNA splicing activation region spans residues 2–190 (SKTNKSKSGS…KSSSKDSRPS (189 aa)). Residues 14-51 (SRSRSASRSRSRSFSKSRSRSRSLSRSRKRRLSSRSRS) are compositionally biased toward basic residues. Arg-17 carries the post-translational modification Dimethylated arginine. Residues 58–75 (HNRERNHPRVYQNRDFRG) show a composition bias toward basic and acidic residues. Asymmetric dimethylarginine is present on Arg-66. Residues 82–94 (RPYYFRGRNRGFY) are compositionally biased toward low complexity. Residues Arg-101 and Arg-108 each carry the asymmetric dimethylarginine modification. The interval 117-559 (AYSPRRGRSR…AKGDFPTGKS (443 aa)) is disordered. The span at 121-143 (RRGRSRSRSPKRRSPSPRSRSHS) shows a compositional bias: basic residues. Positions 144–155 (RNSDKSSSDRSR) are enriched in basic and acidic residues. The segment covering 157 to 166 (SSSSRSSSNH) has biased composition (low complexity). A compositionally biased stretch (basic and acidic residues) spans 167 to 188 (SRVESSKRKSAKEKKSSSKDSR). Residue Lys-202 forms a Glycyl lysine isopeptide (Lys-Gly) (interchain with G-Cter in SUMO1); alternate linkage. Lys-202 participates in a covalent cross-link: Glycyl lysine isopeptide (Lys-Gly) (interchain with G-Cter in SUMO2); alternate. Residues 204 to 220 (QTFSGGTSQDTKASESS) are compositionally biased toward polar residues. A Glycyl lysine isopeptide (Lys-Gly) (interchain with G-Cter in SUMO2) cross-link involves residue Lys-215. Phosphoserine is present on Ser-220. A Glycyl lysine isopeptide (Lys-Gly) (interchain with G-Cter in SUMO2); alternate cross-link involves residue Lys-221. Lys-221 is modified (N6-acetyllysine; alternate). Phosphoserine occurs at positions 232, 237, 240, 243, and 248. Residue Lys-252 forms a Glycyl lysine isopeptide (Lys-Gly) (interchain with G-Cter in SUMO2); alternate linkage. Lys-252 bears the N6-methyllysine; alternate mark. Ser-253 and Ser-257 each carry phosphoserine. Pro residues predominate over residues 266-276 (RPSPVPKPSPP). The span at 282-300 (QMGSTLPSGAGYQSGTHQG) shows a compositional bias: polar residues. Residues 305 to 331 (GSGSLSPSKKSPVGKSPPSTGSTYGSS) are compositionally biased toward low complexity. Phosphoserine occurs at positions 315, 320, and 323. Phosphothreonine is present on Thr-324. Ser-326 is modified (phosphoserine). The residue at position 328 (Tyr-328) is a Phosphotyrosine. Lys-333 is covalently cross-linked (Glycyl lysine isopeptide (Lys-Gly) (interchain with G-Cter in SUMO2)). Ser-339 is modified (phosphoserine). Residue Lys-346 forms a Glycyl lysine isopeptide (Lys-Gly) (interchain with G-Cter in SUMO2); alternate linkage. Residue Lys-346 is modified to N6-acetyllysine; alternate. The span at 347–377 (RYLEEQKTENGKDKEQKQTNTDKEKIKEKGS) shows a compositional bias: basic and acidic residues. Glycyl lysine isopeptide (Lys-Gly) (interchain with G-Cter in SUMO2) cross-links involve residues Lys-353 and Lys-375. The segment at 359–955 (DKEQKQTNTD…EKDNIQPTTE (597 aa)) is required for mRNA decay activity. 2 positions are modified to phosphoserine: Ser-377 and Ser-379. Lys-387 is covalently cross-linked (Glycyl lysine isopeptide (Lys-Gly) (interchain with G-Cter in SUMO1); alternate). Lys-387 is covalently cross-linked (Glycyl lysine isopeptide (Lys-Gly) (interchain with G-Cter in SUMO2); alternate). Glycyl lysine isopeptide (Lys-Gly) (interchain with G-Cter in SUMO2) cross-links involve residues Lys-389 and Lys-396. Thr-397 carries the phosphothreonine modification. Lys-401 is covalently cross-linked (Glycyl lysine isopeptide (Lys-Gly) (interchain with G-Cter in SUMO2)). 2 positions are modified to phosphoserine: Ser-406 and Ser-408. Basic and acidic residues predominate over residues 414-452 (LRDDFEKKMADFHKEEMDDQDKDKAKGRKESEFDDEPKF). Glycyl lysine isopeptide (Lys-Gly) (interchain with G-Cter in SUMO2) cross-links involve residues Lys-421 and Lys-427. Ser-444 is modified (phosphoserine). Lys-451 is covalently cross-linked (Glycyl lysine isopeptide (Lys-Gly) (interchain with G-Cter in SUMO1); alternate). Glycyl lysine isopeptide (Lys-Gly) (interchain with G-Cter in SUMO2); alternate cross-links involve residues Lys-451 and Lys-455. Lys-455 is modified (N6-acetyllysine; alternate). Glycyl lysine isopeptide (Lys-Gly) (interchain with G-Cter in SUMO2) cross-links involve residues Lys-461 and Lys-467. Phosphoserine is present on Ser-468. Glycyl lysine isopeptide (Lys-Gly) (interchain with G-Cter in SUMO2); alternate cross-links involve residues Lys-470 and Lys-481. An N6-acetyllysine; alternate mark is found at Lys-470 and Lys-481. Lys-486 is covalently cross-linked (Glycyl lysine isopeptide (Lys-Gly) (interchain with G-Cter in SUMO2)). Positions 495 to 521 (FPERSKKEDRGKRSEGGHRGFVPEKNF) are enriched in basic and acidic residues. Lys-519 is modified (N6-acetyllysine). Residue Lys-527 forms a Glycyl lysine isopeptide (Lys-Gly) (interchain with G-Cter in SUMO2); alternate linkage. The residue at position 527 (Lys-527) is an N6-acetyllysine; alternate. A Phosphoserine modification is found at Ser-535. Over residues 540–550 (KTSESRDKLGA) the composition is skewed to basic and acidic residues. Lys-551 is covalently cross-linked (Glycyl lysine isopeptide (Lys-Gly) (interchain with G-Cter in SUMO2)). 552–559 (GDFPTGKS) contacts ATP. A Glycyl lysine isopeptide (Lys-Gly) (interchain with G-Cter in SUMO2); alternate cross-link involves residue Lys-558. The residue at position 558 (Lys-558) is an N6-acetyllysine; alternate. Ser-560, Ser-562, and Ser-575 each carry phosphoserine. Lys-602 participates in a covalent cross-link: Glycyl lysine isopeptide (Lys-Gly) (interchain with G-Cter in SUMO2). 5 positions are modified to phosphoserine: Ser-619, Ser-622, Ser-672, Ser-682, and Ser-684. A compositionally biased stretch (basic and acidic residues) spans 663 to 680 (EQEAAKNKKSPEIHRRID). Positions 663–955 (EQEAAKNKKS…EKDNIQPTTE (293 aa)) are disordered. Positions 691–761 (LAHDEMKSPR…RSAEKTEKTH (71 aa)) are enriched in basic and acidic residues. Lys-697 is covalently cross-linked (Glycyl lysine isopeptide (Lys-Gly) (interchain with G-Cter in SUMO2)). At Ser-698 the chain carries Phosphoserine. Residues Lys-705, Lys-709, Lys-711, Lys-756, and Lys-759 each participate in a glycyl lysine isopeptide (Lys-Gly) (interchain with G-Cter in SUMO2) cross-link. A compositionally biased stretch (basic residues) spans 762–775 (KGSKKQKKHRRARD). The segment covering 779-789 (SSSSSSQSSHS) has biased composition (low complexity). The residue at position 811 (Lys-811) is an N6-acetyllysine. Asymmetric dimethylarginine is present on Arg-845. Residues 848 to 859 (YSGNNNNNSNND) are compositionally biased toward low complexity. Thr-874 bears the Phosphothreonine mark. Residues Lys-876 and Lys-879 each participate in a glycyl lysine isopeptide (Lys-Gly) (interchain with G-Cter in SUMO2) cross-link. The span at 881 to 895 (YLHDDREGEGSDKWV) shows a compositional bias: basic and acidic residues. Ser-928 and Ser-939 each carry phosphoserine. Acidic residues predominate over residues 930–940 (EEGEIEDDESG).

This sequence belongs to the BCLAF1/THRAP3 family. In terms of assembly, associated with the large multiprotein complex TRAP (Mediator complex-like). Interacts with SFPQ; the interaction is dependent on SFPQ phosphorylation at 'Thr-687' and inhibits binding of SFPQ to an ESS1 exonic splicing silencer element-containing RNA. Interacts with NXF1. Component of the SNARP complex which consists at least of SNIP1, SNW1, THRAP3, BCLAF1 and PNN. Associated with spliced mRNP complexes. Interacts with HELZ2 and PPARG. Interacts with CLOCK and BMAL1. Component of a MACOM-like complex, named WTAP complex, composed of WTAP, ZC3H13, CBLL1, KIAA1429, RBM15, BCLAF1 and THRAP3. Post-translationally, ADP-ribosylation during genotoxic stress promotes accumulation in nuclear speckles. In terms of tissue distribution, ubiquitous.

It is found in the nucleus. It localises to the nucleoplasm. The protein resides in the nucleus speckle. Its function is as follows. Involved in pre-mRNA splicing. Remains associated with spliced mRNA after splicing which probably involves interactions with the exon junction complex (EJC). Can trigger mRNA decay which seems to be independent of nonsense-mediated decay involving premature stop codons (PTC) recognition. May be involved in nuclear mRNA decay. Involved in regulation of signal-induced alternative splicing. During splicing of PTPRC/CD45 is proposed to sequester phosphorylated SFPQ from PTPRC/CD45 pre-mRNA in resting T-cells. Involved in cyclin-D1/CCND1 mRNA stability probably by acting as component of the SNARP complex which associates with both the 3'end of the CCND1 gene and its mRNA. Involved in response to DNA damage. Is excluced from DNA damage sites in a manner that parallels transcription inhibition; the function may involve the SNARP complex. Initially thought to play a role in transcriptional coactivation through its association with the TRAP complex; however, it is not regarded as a stable Mediator complex subunit. Cooperatively with HELZ2, enhances the transcriptional activation mediated by PPARG, maybe through the stabilization of the PPARG binding to DNA in presence of ligand. May play a role in the terminal stage of adipocyte differentiation. Plays a role in the positive regulation of the circadian clock. Acts as a coactivator of the CLOCK-BMAL1 heterodimer and promotes its transcriptional activator activity and binding to circadian target genes. This Homo sapiens (Human) protein is Thyroid hormone receptor-associated protein 3.